The chain runs to 506 residues: Probable Xaa-Pro aminopeptidase PAAG_05466 (506 aa).

Residues aspartate 285, aspartate 296, glutamate 433, and glutamate 471 each contribute to the Mn(2+) site.

It belongs to the peptidase M24B family. Mn(2+) is required as a cofactor.

It catalyses the reaction Release of any N-terminal amino acid, including proline, that is linked to proline, even from a dipeptide or tripeptide.. Catalyzes the removal of a penultimate prolyl residue from the N-termini of peptides. This is Probable Xaa-Pro aminopeptidase PAAG_05466 from Paracoccidioides lutzii (strain ATCC MYA-826 / Pb01) (Paracoccidioides brasiliensis).